The primary structure comprises 328 residues: Biotin synthase (328 aa).

In terms of domain architecture, Radical SAM core spans 48-277; it reads FVGNEVHLCS…GKRITVCGGR (230 aa). [4Fe-4S] cluster is bound by residues C66, C70, and C73. S142 and C202 together coordinate [2Fe-2S] cluster.

Belongs to the radical SAM superfamily. Biotin synthase family. In terms of assembly, homodimer. [4Fe-4S] cluster is required as a cofactor. It depends on [2Fe-2S] cluster as a cofactor.

The enzyme catalyses (4R,5S)-dethiobiotin + (sulfur carrier)-SH + 2 reduced [2Fe-2S]-[ferredoxin] + 2 S-adenosyl-L-methionine = (sulfur carrier)-H + biotin + 2 5'-deoxyadenosine + 2 L-methionine + 2 oxidized [2Fe-2S]-[ferredoxin]. The protein operates within cofactor biosynthesis; biotin biosynthesis; biotin from 7,8-diaminononanoate: step 2/2. Catalyzes the conversion of dethiobiotin (DTB) to biotin by the insertion of a sulfur atom into dethiobiotin via a radical-based mechanism. The polypeptide is Biotin synthase (Citrifermentans bemidjiense (strain ATCC BAA-1014 / DSM 16622 / JCM 12645 / Bem) (Geobacter bemidjiensis)).